The chain runs to 365 residues: Histidine biosynthesis bifunctional protein HisB (365 aa).

The histidinol-phosphatase stretch occupies residues 1-176; sequence MTQQPTLFID…VADPKGLGQP (176 aa). Asp-10 serves as the catalytic Nucleophile. Mg(2+) is bound by residues Asp-10 and Asp-12. Asp-12 functions as the Proton donor in the catalytic mechanism. Residues Cys-93, His-95, Cys-101, and Cys-103 each contribute to the Zn(2+) site. Asp-130 contacts Mg(2+). Positions 177-365 are imidazoleglycerol-phosphate dehydratase; that stretch reads RHAVVARKTK…NEMPSSKGVL (189 aa).

This sequence in the N-terminal section; belongs to the histidinol-phosphatase family. It in the C-terminal section; belongs to the imidazoleglycerol-phosphate dehydratase family. The cofactor is Mg(2+). It depends on Zn(2+) as a cofactor.

It localises to the cytoplasm. The catalysed reaction is D-erythro-1-(imidazol-4-yl)glycerol 3-phosphate = 3-(imidazol-4-yl)-2-oxopropyl phosphate + H2O. It carries out the reaction L-histidinol phosphate + H2O = L-histidinol + phosphate. It functions in the pathway amino-acid biosynthesis; L-histidine biosynthesis; L-histidine from 5-phospho-alpha-D-ribose 1-diphosphate: step 6/9. Its pathway is amino-acid biosynthesis; L-histidine biosynthesis; L-histidine from 5-phospho-alpha-D-ribose 1-diphosphate: step 8/9. This Mannheimia succiniciproducens (strain KCTC 0769BP / MBEL55E) protein is Histidine biosynthesis bifunctional protein HisB.